The primary structure comprises 983 residues: Protein CLASP-3 (983 aa).

Disordered regions lie at residues Tyr-356–Ala-393 and Ser-666–Ser-690. The span at Arg-359–Thr-372 shows a compositional bias: low complexity. An HEAT repeat occupies Ile-918 to His-956.

It belongs to the CLASP family.

It is found in the cytoplasm. It localises to the cytoskeleton. Functionally, microtubule plus-end tracking protein that promotes the stabilization of dynamic microtubules. This Caenorhabditis elegans protein is Protein CLASP-3 (cls-3).